The primary structure comprises 269 residues: 1-(5-phosphoribosyl)-5-[(5-phosphoribosylamino)methylideneamino] imidazole-4-carboxamide isomerase (269 aa).

The Proton acceptor role is filled by D10. D132 serves as the catalytic Proton donor.

The protein belongs to the HisA/HisF family.

The protein resides in the cytoplasm. It carries out the reaction 1-(5-phospho-beta-D-ribosyl)-5-[(5-phospho-beta-D-ribosylamino)methylideneamino]imidazole-4-carboxamide = 5-[(5-phospho-1-deoxy-D-ribulos-1-ylimino)methylamino]-1-(5-phospho-beta-D-ribosyl)imidazole-4-carboxamide. Its pathway is amino-acid biosynthesis; L-histidine biosynthesis; L-histidine from 5-phospho-alpha-D-ribose 1-diphosphate: step 4/9. In Xylella fastidiosa (strain M12), this protein is 1-(5-phosphoribosyl)-5-[(5-phosphoribosylamino)methylideneamino] imidazole-4-carboxamide isomerase.